The following is a 397-amino-acid chain: 1-deoxy-D-xylulose 5-phosphate reductoisomerase (397 aa).

NADPH is bound by residues Ser-10, Gly-11, Ser-12, Ile-13, Ala-36, Arg-37, and Asn-124. Position 125 (Lys-125) interacts with 1-deoxy-D-xylulose 5-phosphate. An NADPH-binding site is contributed by Glu-126. Asp-150 is a binding site for Mn(2+). 4 residues coordinate 1-deoxy-D-xylulose 5-phosphate: Ser-151, Glu-152, Ser-186, and His-209. Mn(2+) is bound at residue Glu-152. NADPH is bound at residue Gly-215. The 1-deoxy-D-xylulose 5-phosphate site is built by Ser-222, Asn-227, Lys-228, and Glu-231. Residue Glu-231 coordinates Mn(2+).

It belongs to the DXR family. Mg(2+) serves as cofactor. Requires Mn(2+) as cofactor.

It carries out the reaction 2-C-methyl-D-erythritol 4-phosphate + NADP(+) = 1-deoxy-D-xylulose 5-phosphate + NADPH + H(+). It functions in the pathway isoprenoid biosynthesis; isopentenyl diphosphate biosynthesis via DXP pathway; isopentenyl diphosphate from 1-deoxy-D-xylulose 5-phosphate: step 1/6. Its function is as follows. Catalyzes the NADPH-dependent rearrangement and reduction of 1-deoxy-D-xylulose-5-phosphate (DXP) to 2-C-methyl-D-erythritol 4-phosphate (MEP). The sequence is that of 1-deoxy-D-xylulose 5-phosphate reductoisomerase from Aeromonas hydrophila subsp. hydrophila (strain ATCC 7966 / DSM 30187 / BCRC 13018 / CCUG 14551 / JCM 1027 / KCTC 2358 / NCIMB 9240 / NCTC 8049).